A 329-amino-acid chain; its full sequence is ADP-L-glycero-D-manno-heptose-6-epimerase (329 aa).

NADP(+) contacts are provided by residues 10 to 11, 31 to 32, K38, K53, 74 to 78, and N91; these read FI, DD, and QGACS. Residue Y138 is the Proton acceptor of the active site. K142 is a binding site for NADP(+). Residue N167 coordinates substrate. V168 and K176 together coordinate NADP(+). Catalysis depends on K176, which acts as the Proton acceptor. Residues R178, H185, 199–202, R212, and Y291 each bind substrate; that span reads FAGW.

It belongs to the NAD(P)-dependent epimerase/dehydratase family. HldD subfamily. Homopentamer. NADP(+) is required as a cofactor.

It catalyses the reaction ADP-D-glycero-beta-D-manno-heptose = ADP-L-glycero-beta-D-manno-heptose. It functions in the pathway nucleotide-sugar biosynthesis; ADP-L-glycero-beta-D-manno-heptose biosynthesis; ADP-L-glycero-beta-D-manno-heptose from D-glycero-beta-D-manno-heptose 7-phosphate: step 4/4. Its pathway is bacterial outer membrane biogenesis; LPS core biosynthesis. Catalyzes the interconversion between ADP-D-glycero-beta-D-manno-heptose and ADP-L-glycero-beta-D-manno-heptose via an epimerization at carbon 6 of the heptose. This Bordetella parapertussis (strain 12822 / ATCC BAA-587 / NCTC 13253) protein is ADP-L-glycero-D-manno-heptose-6-epimerase.